The chain runs to 861 residues: Protein argonaute-4 (861 aa).

Positions 219–338 (PIIEFMCEVL…LPLEVCNIVA (120 aa)) constitute a PAZ domain. The 312-residue stretch at 509 to 820 (LIVVILPGKT…VAFRARYHLV (312 aa)) folds into the Piwi domain. The tract at residues 825-846 (DSAEGSHVSGQSNGRDPQALAK) is disordered.

The protein belongs to the argonaute family. Ago subfamily. Interacts with EIF4B, IMP8, PRMT5, TNRC6A and TNRC6B. Interacts with ZFP36. In terms of processing, ubiquitinated on surface-exposed lysines by a SCF-like E3 ubiquitin-protein ligase complex containing ZSWIM8 during target-directed microRNA degradation (TDMD), a process that mediates degradation of microRNAs (miRNAs). Ubiquitination by the SCF-like E3 ubiquitin-protein ligase complex containing ZSWIM8 leads to its subsequent degradation, thereby exposing miRNAs for degradation. ZSWIM8 recognizes and binds AGO4 when it is engaged with a TDMD target.

It localises to the cytoplasm. Its subcellular location is the P-body. Required for RNA-mediated gene silencing (RNAi). Binds to short RNAs such as microRNAs (miRNAs) and represses the translation of mRNAs which are complementary to them. Lacks endonuclease activity and does not appear to cleave target mRNAs. In Mus musculus (Mouse), this protein is Protein argonaute-4 (Ago4).